The sequence spans 1034 residues: Glycine dehydrogenase (decarboxylating) B, mitochondrial (1034 aa).

Residues 1–63 constitute a mitochondrion transit peptide; it reads MERARRLAIL…LNGFGSQVRT (63 aa). N6-(pyridoxal phosphate)lysine is present on lysine 770.

This sequence belongs to the GcvP family. As to quaternary structure, homodimer. The glycine cleavage system is composed of four proteins: P, T, L and H. Pyridoxal 5'-phosphate is required as a cofactor.

The protein localises to the mitochondrion. It catalyses the reaction N(6)-[(R)-lipoyl]-L-lysyl-[glycine-cleavage complex H protein] + glycine + H(+) = N(6)-[(R)-S(8)-aminomethyldihydrolipoyl]-L-lysyl-[glycine-cleavage complex H protein] + CO2. Its function is as follows. The glycine cleavage system catalyzes the degradation of glycine. The P protein binds the alpha-amino group of glycine through its pyridoxal phosphate cofactor; CO(2) is released and the remaining methylamine moiety is then transferred to the lipoamide cofactor of the H protein. The chain is Glycine dehydrogenase (decarboxylating) B, mitochondrial (GDCSPB) from Flaveria pringlei.